Here is a 168-residue protein sequence, read N- to C-terminus: SsrA-binding protein (168 aa).

It belongs to the SmpB family.

Its subcellular location is the cytoplasm. Its function is as follows. Required for rescue of stalled ribosomes mediated by trans-translation. Binds to transfer-messenger RNA (tmRNA), required for stable association of tmRNA with ribosomes. tmRNA and SmpB together mimic tRNA shape, replacing the anticodon stem-loop with SmpB. tmRNA is encoded by the ssrA gene; the 2 termini fold to resemble tRNA(Ala) and it encodes a 'tag peptide', a short internal open reading frame. During trans-translation Ala-aminoacylated tmRNA acts like a tRNA, entering the A-site of stalled ribosomes, displacing the stalled mRNA. The ribosome then switches to translate the ORF on the tmRNA; the nascent peptide is terminated with the 'tag peptide' encoded by the tmRNA and targeted for degradation. The ribosome is freed to recommence translation, which seems to be the essential function of trans-translation. The sequence is that of SsrA-binding protein from Mycobacterium sp. (strain JLS).